Consider the following 382-residue polypeptide: MYALTQGRIFTGHEFLDDHAVVIADGLIKSVCPVAELPPEIEQRSLNGAILSPGFIDVQLNGCGGVQFNDTAEAVSVETLEIMQKANEKSGCTNYLPTLITTSDELMKQGVRVMREYLAKHPNQALGLHLEGPWLNLVKKGTHNPNFVRKPDAALVDFLCENADVITKVTLAPEMVPAEVISKLANAGIVVSAGHSNATLKEAKAGFRAGITFATHLYNAMPYITGREPGLAGAILDEADIYCGIIADGLHVDYANIRNAKRLKGDKLCLVTDATAPAGANIEQFIFAGKTIYYRNGLCVDENGTLSGSSLTMIEGVRNLVEHCGIALDEVLRMATLYPARAIGVEKRLGTLAAGKVANLTAFTPDFKITKTIVNGNEVVTQ.

E131 is an a divalent metal cation binding site. 142-143 (TH) is a binding site for substrate. H195 and H216 together coordinate a divalent metal cation. Substrate-binding positions include 219–220 (NA), R227, and 248–251 (DGLH). D273 (proton donor/acceptor) is an active-site residue. 306-308 (LSG) contributes to the substrate binding site.

It belongs to the metallo-dependent hydrolases superfamily. NagA family. In terms of assembly, homotetramer. The cofactor is a divalent metal cation.

It catalyses the reaction N-acetyl-D-glucosamine 6-phosphate + H2O = D-glucosamine 6-phosphate + acetate. The protein operates within amino-sugar metabolism; N-acetylneuraminate degradation; D-fructose 6-phosphate from N-acetylneuraminate: step 4/5. Involved in the first committed step in the biosynthesis of amino-sugar-nucleotides. Catalyzes the hydrolysis of the N-acetyl group of N-acetylglucosamine-6-phosphate (GlcNAc-6-P) to yield glucosamine 6-phosphate and acetate. Can probably also catalyze the deacetylation of N-acetyl-D-galactosamine 6-phosphate to D-galactosamine 6-phosphate. The polypeptide is N-acetylglucosamine-6-phosphate deacetylase (nagA) (Escherichia coli O157:H7).